A 246-amino-acid chain; its full sequence is Serine protease 1 (246 aa).

Residues 1-17 form the signal peptide; it reads MKTFIFLALLGAAVAFP. Residues 18–23 constitute a propeptide, activation peptide; sequence VDDDDK. The Peptidase S1 domain maps to 24 to 244; sequence IVGGYTCGAN…YVSWIKQTIA (221 aa). Cystine bridges form between cysteine 30-cysteine 160, cysteine 48-cysteine 64, cysteine 132-cysteine 233, cysteine 139-cysteine 206, cysteine 171-cysteine 185, and cysteine 196-cysteine 220. Histidine 63 serves as the catalytic Charge relay system. 4 residues coordinate Ca(2+): glutamate 75, asparagine 77, valine 80, and glutamate 85. The Charge relay system role is filled by aspartate 107. Substrate contacts are provided by residues 194-195, 197-198, and serine 200; these read DS and QG. The Charge relay system role is filled by serine 200.

The protein belongs to the peptidase S1 family. In terms of assembly, interacts with SERPINA1. Requires Ca(2+) as cofactor. In terms of processing, autocatalytic cleavage after Lys-23 leads to beta-trypsin by releasing a terminal hexapeptide. Subsequent cleavage after Lys-148 leads to alpha-trypsin. Further cleavage after Lys-193 yields pseudotrypsin. A cleavage may also occur after Arg-122. Post-translationally, not sulfated on tyrosine residue(s). In terms of tissue distribution, synthesized in the acinar cells of the pancreas.

The protein localises to the secreted. It localises to the extracellular space. It carries out the reaction Preferential cleavage: Arg-|-Xaa, Lys-|-Xaa.. Its activity is regulated as follows. Is inhibited by scorpion cyclotide trypsin inhibitor TopI1. The protein is Serine protease 1 (PRSS1) of Bos taurus (Bovine).